Here is a 194-residue protein sequence, read N- to C-terminus: NADH-quinone oxidoreductase subunit B 1 (194 aa).

The segment covering 1 to 12 (MGVTPVSNQPLV) has biased composition (polar residues). A disordered region spans residues 1-23 (MGVTPVSNQPLVAQQPKGIIDPS). The [4Fe-4S] cluster site is built by cysteine 73, cysteine 74, cysteine 138, and cysteine 168.

This sequence belongs to the complex I 20 kDa subunit family. NDH-1 is composed of 14 different subunits. Subunits NuoB, C, D, E, F, and G constitute the peripheral sector of the complex. It depends on [4Fe-4S] cluster as a cofactor.

Its subcellular location is the cell inner membrane. It catalyses the reaction a quinone + NADH + 5 H(+)(in) = a quinol + NAD(+) + 4 H(+)(out). In terms of biological role, NDH-1 shuttles electrons from NADH, via FMN and iron-sulfur (Fe-S) centers, to quinones in the respiratory chain. The immediate electron acceptor for the enzyme in this species is believed to be ubiquinone. Couples the redox reaction to proton translocation (for every two electrons transferred, four hydrogen ions are translocated across the cytoplasmic membrane), and thus conserves the redox energy in a proton gradient. This is NADH-quinone oxidoreductase subunit B 1 from Rhizobium etli (strain ATCC 51251 / DSM 11541 / JCM 21823 / NBRC 15573 / CFN 42).